The following is a 160-amino-acid chain: MPRKGPVPPREIPPDPKYGDVLVQKLINKVMKDGKKSVAEWIVYTALEEAAKEVNMHPVELLHKVIEKLKPEWEVRPRRVGGATYQVPIEVPERRQISLAIKWLVQAARERPRGRGQYTMIERLKAELLDALNERGGAYKKKEETHRMAHANMVFSHFRW.

Belongs to the universal ribosomal protein uS7 family. In terms of assembly, part of the 30S ribosomal subunit. Contacts proteins S9 and S11.

In terms of biological role, one of the primary rRNA binding proteins, it binds directly to 16S rRNA where it nucleates assembly of the head domain of the 30S subunit. Is located at the subunit interface close to the decoding center, probably blocks exit of the E-site tRNA. In Aquifex aeolicus (strain VF5), this protein is Small ribosomal subunit protein uS7B.